A 277-amino-acid polypeptide reads, in one-letter code: Putative phosphoenolpyruvate synthase regulatory protein (277 aa).

157-164 contacts ADP; sequence GVSRCGKT.

This sequence belongs to the pyruvate, phosphate/water dikinase regulatory protein family. PSRP subfamily.

It catalyses the reaction [pyruvate, water dikinase] + ADP = [pyruvate, water dikinase]-phosphate + AMP + H(+). It carries out the reaction [pyruvate, water dikinase]-phosphate + phosphate + H(+) = [pyruvate, water dikinase] + diphosphate. Bifunctional serine/threonine kinase and phosphorylase involved in the regulation of the phosphoenolpyruvate synthase (PEPS) by catalyzing its phosphorylation/dephosphorylation. The chain is Putative phosphoenolpyruvate synthase regulatory protein from Photobacterium profundum (strain SS9).